The following is a 472-amino-acid chain: Carboxypeptidase Q (472 aa).

The signal sequence occupies residues 1-20; the sequence is MKFLLFMFVGVVHLLPLASG. Residues 21–44 constitute a propeptide that is removed on maturation; it reads KAIYGNGPSQRTFQEIKEEIAHYG. N-linked (GlcNAc...) asparagine glycans are attached at residues asparagine 52, asparagine 61, and asparagine 179. Zn(2+) contacts are provided by histidine 290 and aspartate 302. The active-site Nucleophile is glutamate 336. Glutamate 337 serves as a coordination point for Zn(2+). 2 N-linked (GlcNAc...) asparagine glycosylation sites follow: asparagine 353 and asparagine 356. Aspartate 364 contributes to the Zn(2+) binding site. The N-linked (GlcNAc...) asparagine glycan is linked to asparagine 396. Histidine 434 serves as a coordination point for Zn(2+).

Belongs to the peptidase M28 family. In terms of assembly, homodimer. The monomeric form is inactive while the homodimer is active. N-glycosylated. The secreted form is modified by hybrid or complex type oligosaccharide chains.

Its subcellular location is the endoplasmic reticulum. It localises to the golgi apparatus. The protein resides in the lysosome. It is found in the secreted. Functionally, carboxypeptidase that may play an important role in the hydrolysis of circulating peptides. Catalyzes the hydrolysis of dipeptides with unsubstituted terminals into amino acids. May play a role in the liberation of thyroxine hormone from its thyroglobulin (Tg) precursor. The sequence is that of Carboxypeptidase Q (CPQ) from Bos taurus (Bovine).